Reading from the N-terminus, the 189-residue chain is Peptidyl-tRNA hydrolase (189 aa).

Tyr-15 lines the tRNA pocket. Catalysis depends on His-20, which acts as the Proton acceptor. Positions 67, 69, and 115 each coordinate tRNA.

It belongs to the PTH family. In terms of assembly, monomer.

The protein localises to the cytoplasm. It carries out the reaction an N-acyl-L-alpha-aminoacyl-tRNA + H2O = an N-acyl-L-amino acid + a tRNA + H(+). Hydrolyzes ribosome-free peptidyl-tRNAs (with 1 or more amino acids incorporated), which drop off the ribosome during protein synthesis, or as a result of ribosome stalling. Its function is as follows. Catalyzes the release of premature peptidyl moieties from peptidyl-tRNA molecules trapped in stalled 50S ribosomal subunits, and thus maintains levels of free tRNAs and 50S ribosomes. This chain is Peptidyl-tRNA hydrolase, found in Symbiobacterium thermophilum (strain DSM 24528 / JCM 14929 / IAM 14863 / T).